A 159-amino-acid polypeptide reads, in one-letter code: MNIKFVVVGKLKEKYFKQGIAEYAKRLSRFCKFSIVEVPDEKAPENLSQAEMDRVMAEEGERILAKIKDREYVYALAILGKERSSEAFAKEIKDLTTYGHSDITFVIGGSLGLTPAVLKRADTQISFGKFTLPHQLMRLVLTEQVYRAFMINEGSPYHK.

L76 and G108 together coordinate S-adenosyl-L-methionine.

Belongs to the RNA methyltransferase RlmH family. As to quaternary structure, homodimer.

It localises to the cytoplasm. The enzyme catalyses pseudouridine(1915) in 23S rRNA + S-adenosyl-L-methionine = N(3)-methylpseudouridine(1915) in 23S rRNA + S-adenosyl-L-homocysteine + H(+). In terms of biological role, specifically methylates the pseudouridine at position 1915 (m3Psi1915) in 23S rRNA. In Levilactobacillus brevis (strain ATCC 367 / BCRC 12310 / CIP 105137 / JCM 1170 / LMG 11437 / NCIMB 947 / NCTC 947) (Lactobacillus brevis), this protein is Ribosomal RNA large subunit methyltransferase H.